The sequence spans 405 residues: Pentatricopeptide repeat-containing protein At3g14580, mitochondrial (405 aa).

Residues 1 to 37 constitute a mitochondrion transit peptide; the sequence is MILRRLVLSATSNSNPRRSQSLSSSGVRILSSSSSDR. The disordered stretch occupies residues 13–44; sequence NSNPRRSQSLSSSGVRILSSSSSDRYTSSSQR. 8 PPR repeats span residues 94–124, 130–165, 166–200, 201–235, 236–270, 271–305, 306–340, and 341–375; these read TESL…IKLE, SEEF…GCWP, SSKS…GVEI, DACC…KSRP, NVMT…RIEP, DTIT…GCEP, NPGT…GMRP, and SFLS…GFVP.

This sequence belongs to the PPR family. P subfamily.

It is found in the mitochondrion. This is Pentatricopeptide repeat-containing protein At3g14580, mitochondrial from Arabidopsis thaliana (Mouse-ear cress).